A 360-amino-acid chain; its full sequence is Biotin synthase (360 aa).

The Radical SAM core domain occupies 83–315 (FCGKYFDLCT…KSFLRYCGGR (233 aa)). The [4Fe-4S] cluster site is built by C101, C105, and C108. 4 residues coordinate [2Fe-2S] cluster: S145, C180, C240, and R310.

It belongs to the radical SAM superfamily. Biotin synthase family. In terms of assembly, homodimer. The cofactor is [4Fe-4S] cluster. It depends on [2Fe-2S] cluster as a cofactor.

The enzyme catalyses (4R,5S)-dethiobiotin + (sulfur carrier)-SH + 2 reduced [2Fe-2S]-[ferredoxin] + 2 S-adenosyl-L-methionine = (sulfur carrier)-H + biotin + 2 5'-deoxyadenosine + 2 L-methionine + 2 oxidized [2Fe-2S]-[ferredoxin]. It participates in cofactor biosynthesis; biotin biosynthesis; biotin from 7,8-diaminononanoate: step 2/2. Catalyzes the conversion of dethiobiotin (DTB) to biotin by the insertion of a sulfur atom into dethiobiotin via a radical-based mechanism. This is Biotin synthase from Fusobacterium nucleatum subsp. nucleatum (strain ATCC 25586 / DSM 15643 / BCRC 10681 / CIP 101130 / JCM 8532 / KCTC 2640 / LMG 13131 / VPI 4355).